The sequence spans 170 residues: MQTTIRIIGIDPGLRRTGWGIIETLGNSLRFVASGTVTSDGEMDLASRLCQLHDGLAEVVHGYQPHEAAVEQTFVNKDATATLKLGQARGIAMLVPARAGLRVAEYAPNAVKKAVIGVGHGEKQQIHMMLKVLMPKAEFKGNDAADALAIAICHAHNRQAVTSRLAALAG.

Residues Asp-11, Glu-71, and Asp-143 contribute to the active site. The Mg(2+) site is built by Asp-11, Glu-71, and Asp-143.

This sequence belongs to the RuvC family. In terms of assembly, homodimer which binds Holliday junction (HJ) DNA. The HJ becomes 2-fold symmetrical on binding to RuvC with unstacked arms; it has a different conformation from HJ DNA in complex with RuvA. In the full resolvosome a probable DNA-RuvA(4)-RuvB(12)-RuvC(2) complex forms which resolves the HJ. Requires Mg(2+) as cofactor.

The protein localises to the cytoplasm. The catalysed reaction is Endonucleolytic cleavage at a junction such as a reciprocal single-stranded crossover between two homologous DNA duplexes (Holliday junction).. Its function is as follows. The RuvA-RuvB-RuvC complex processes Holliday junction (HJ) DNA during genetic recombination and DNA repair. Endonuclease that resolves HJ intermediates. Cleaves cruciform DNA by making single-stranded nicks across the HJ at symmetrical positions within the homologous arms, yielding a 5'-phosphate and a 3'-hydroxyl group; requires a central core of homology in the junction. The consensus cleavage sequence is 5'-(A/T)TT(C/G)-3'. Cleavage occurs on the 3'-side of the TT dinucleotide at the point of strand exchange. HJ branch migration catalyzed by RuvA-RuvB allows RuvC to scan DNA until it finds its consensus sequence, where it cleaves and resolves the cruciform DNA. This chain is Crossover junction endodeoxyribonuclease RuvC, found in Sinorhizobium fredii (strain NBRC 101917 / NGR234).